The chain runs to 580 residues: Rap guanine nucleotide exchange factor 5 (580 aa).

The N-terminal Ras-GEF domain occupies 67–200 (DRYVVVSGTP…ELKEFQKILG (134 aa)). Positions 344 to 579 (NTWDLALELM…FELSHRLEPR (236 aa)) constitute a Ras-GEF domain.

In terms of tissue distribution, in the embryo, expressed in young neurons of the developing telencephalon, diencephalon and hindbrain. Not expressed in progenitor cells in the ventricular zone.

It localises to the nucleus. In terms of biological role, guanine nucleotide exchange factor (GEF) for RAP1A, RAP2A and MRAS/M-Ras-GTP. Its association with MRAS inhibits Rap1 activation. The chain is Rap guanine nucleotide exchange factor 5 (Rapgef5) from Rattus norvegicus (Rat).